A 340-amino-acid polypeptide reads, in one-letter code: Ketol-acid reductoisomerase (NADP(+)) (340 aa).

The KARI N-terminal Rossmann domain occupies 3–182; the sequence is VEMLYEADVK…GSARVGLLVT (180 aa). NADP(+)-binding positions include 26–29, Arg-49, Ser-53, and 83–86; these read YGSQ and DEIQ. Residue His-108 is part of the active site. Gly-134 is an NADP(+) binding site. The region spanning 183–328 is the KARI C-terminal knotted domain; the sequence is TFKEETEEDL…AELRKAMPFV (146 aa). Asp-191, Glu-195, Glu-227, and Glu-231 together coordinate Mg(2+). Ser-252 is a substrate binding site.

This sequence belongs to the ketol-acid reductoisomerase family. The cofactor is Mg(2+).

It carries out the reaction (2R)-2,3-dihydroxy-3-methylbutanoate + NADP(+) = (2S)-2-acetolactate + NADPH + H(+). The catalysed reaction is (2R,3R)-2,3-dihydroxy-3-methylpentanoate + NADP(+) = (S)-2-ethyl-2-hydroxy-3-oxobutanoate + NADPH + H(+). It participates in amino-acid biosynthesis; L-isoleucine biosynthesis; L-isoleucine from 2-oxobutanoate: step 2/4. The protein operates within amino-acid biosynthesis; L-valine biosynthesis; L-valine from pyruvate: step 2/4. Functionally, involved in the biosynthesis of branched-chain amino acids (BCAA). Catalyzes an alkyl-migration followed by a ketol-acid reduction of (S)-2-acetolactate (S2AL) to yield (R)-2,3-dihydroxy-isovalerate. In the isomerase reaction, S2AL is rearranged via a Mg-dependent methyl migration to produce 3-hydroxy-3-methyl-2-ketobutyrate (HMKB). In the reductase reaction, this 2-ketoacid undergoes a metal-dependent reduction by NADPH to yield (R)-2,3-dihydroxy-isovalerate. This is Ketol-acid reductoisomerase (NADP(+)) from Streptococcus mutans serotype c (strain ATCC 700610 / UA159).